Here is a 544-residue protein sequence, read N- to C-terminus: Cytochrome P450 2U1 (544 aa).

A run of 4 helical transmembrane segments spans residues 30–50 (LDPS…GWSW), 113–133 (VYGS…LSDF), 261–281 (ICLN…YLPF), and 342–362 (LFYI…NSLL). Residue cysteine 490 coordinates heme. Residues 495–515 (LAKMELFLMFVSLMQSFAFAL) traverse the membrane as a helical segment.

The protein belongs to the cytochrome P450 family. Heme serves as cofactor. As to expression, widely expressed with stronger expression in thymus, heart and cerebellum.

Its subcellular location is the endoplasmic reticulum membrane. It is found in the microsome membrane. It localises to the mitochondrion inner membrane. The enzyme catalyses an omega-methyl-long-chain fatty acid + reduced [NADPH--hemoprotein reductase] + O2 = an omega-hydroxy-long-chain fatty acid + oxidized [NADPH--hemoprotein reductase] + H2O + H(+). It carries out the reaction (5Z,8Z,11Z,14Z)-eicosatetraenoate + reduced [NADPH--hemoprotein reductase] + O2 = 19-hydroxy-(5Z,8Z,11Z,14Z)-eicosatetraenoate + oxidized [NADPH--hemoprotein reductase] + H2O + H(+). The catalysed reaction is (5Z,8Z,11Z,14Z)-eicosatetraenoate + reduced [NADPH--hemoprotein reductase] + O2 = 20-hydroxy-(5Z,8Z,11Z,14Z)-eicosatetraenoate + oxidized [NADPH--hemoprotein reductase] + H2O + H(+). It catalyses the reaction N-[(5Z,8Z,11Z,14Z)-eicosatetraenoyl]-serotonin + reduced [NADPH--hemoprotein reductase] + O2 = 2-oxo-N-[(5Z,8Z,11Z,14Z)-eicosatetraenoyl]-serotonin + oxidized [NADPH--hemoprotein reductase] + H2O + H(+). It participates in lipid metabolism; arachidonate metabolism. Its function is as follows. A cytochrome P450 monooxygenase involved in the metabolism of arachidonic acid and its conjugates. Mechanistically, uses molecular oxygen inserting one oxygen atom into a substrate, and reducing the second into a water molecule, with two electrons provided by NADPH via cytochrome P450 reductase (CPR; NADPH-ferrihemoprotein reductase). Acts as an omega and omega-1 hydroxylase for arachidonic acid and possibly for other long chain fatty acids. May modulate the arachidonic acid signaling pathway and play a role in other fatty acid signaling processes. May down-regulate the biological activities of N-arachidonoyl-serotonin, an endocannabinoid that has anti-nociceptive effects through inhibition of fatty acid amide hydrolase FAAH, TRPV1 receptor and T-type calcium channels. Catalyzes C-2 oxidation of the indole ring of N-arachidonoyl-serotonin forming a less active product 2-oxo-N-arachidonoyl-serotonin. This Homo sapiens (Human) protein is Cytochrome P450 2U1.